The primary structure comprises 210 residues: Urease accessory protein UreG (210 aa).

14 to 21 (GPVGSGKT) lines the GTP pocket.

The protein belongs to the SIMIBI class G3E GTPase family. UreG subfamily. Homodimer. UreD, UreF and UreG form a complex that acts as a GTP-hydrolysis-dependent molecular chaperone, activating the urease apoprotein by helping to assemble the nickel containing metallocenter of UreC. The UreE protein probably delivers the nickel.

The protein localises to the cytoplasm. Facilitates the functional incorporation of the urease nickel metallocenter. This process requires GTP hydrolysis, probably effectuated by UreG. The sequence is that of Urease accessory protein UreG from Rhodopseudomonas palustris (strain BisB5).